The sequence spans 1733 residues: Polyketide synthase Pks13 (1733 aa).

The Carrier 1 domain occupies 17 to 95; the sequence is ELTVPEMRQW…SLATRIIEGE (79 aa). O-(pantetheine 4'-phosphoryl)serine is present on serine 55. The region spanning 116–541 is the Ketosynthase family 3 (KS3) domain; sequence RVDIAIVGLS…GANAHVVVRE (426 aa). Cysteine 287 (acyl-thioester intermediate; for beta-ketoacyl synthase activity) is an active-site residue. Active-site for beta-ketoacyl synthase activity residues include histidine 423 and histidine 463. Basic and acidic residues predominate over residues 548-560; that stretch reads VEKEPEPEPEPKA. The interval 548-567 is disordered; the sequence is VEKEPEPEPEPKAAAEPAEA. Residues 713-1034 form an acyltransferase region; the sequence is VWVLAGFGAQ…MVSTMAQLYV (322 aa). Residue serine 801 is the Acyl-ester intermediate; for acyltransferase activity of the active site. Residues 1232–1309 form the Carrier 2 domain; the sequence is ETIAERLGLI…KLIEYAVEHR (78 aa). Serine 1266 bears the O-(pantetheine 4'-phosphoryl)serine mark. The disordered stretch occupies residues 1344–1368; that stretch reads PVDSEAGVALPSPQNGEQPNPTGPA. The segment at 1470–1563 is thioesterase-like; the sequence is PVFVFHPAGG…RFVGLIDAVR (94 aa). Serine 1533 acts as the For thioesterase-like activity in catalysis.

In terms of processing, 4'-phosphopantetheine is transferred from CoA to specific serines of apo-Pks13 by PptT.

It participates in lipid metabolism; mycolic acid biosynthesis. Its activity is regulated as follows. The presence of FadD32 is necessary for the transfer of the acyl chain from the AMP carrier onto Pks13. In terms of biological role, involved in the biosynthesis of mycolic acids. Forms, with FadD32, the initiation module of the mycolic condensation system. Synthesizes, in coupled reaction with FadD32, the biosynthetic precursors of mycolic acids, alpha-alkyl beta-ketoacids, via the condensation of two long chain fatty acid derivatives, a very long meromycoloyl-AMP and a shorter 2-carboxyacyl-CoA. The acyl chain of the acyl-AMP produced by FadD32 is specifically transferred onto the N-terminal ACP domain of Pks13, and then transferred onto the KS domain. The extender unit carboxyacyl-CoA is specifically loaded onto the AT domain, which catalyzes the covalent attachment of the carboxyacyl chain to its active site, and its subsequent transfer onto the P-pant arm of the C-terminal ACP domain. The KS domain catalyzes the condensation between the two loaded fatty acyl chains to produce an alpha-alkyl beta-ketothioester linked to the C-ACP domain. Then, the thioesterase-like domain acts as a transacylase and is responsible for both the release and the transfer of the alpha-alkyl beta-ketoacyl chain onto a polyol acceptor molecule, particularly trehalose, leading to the formation of the trehalose monomycolate precursor. The chain is Polyketide synthase Pks13 from Mycobacterium tuberculosis (strain ATCC 25618 / H37Rv).